The following is a 215-amino-acid chain: Thymidylate kinase (215 aa).

Position 10–17 (10–17 (GGEGVGKT)) interacts with ATP.

It belongs to the thymidylate kinase family.

The enzyme catalyses dTMP + ATP = dTDP + ADP. Its function is as follows. Phosphorylation of dTMP to form dTDP in both de novo and salvage pathways of dTTP synthesis. The chain is Thymidylate kinase from Bartonella henselae (strain ATCC 49882 / DSM 28221 / CCUG 30454 / Houston 1) (Rochalimaea henselae).